Reading from the N-terminus, the 315-residue chain is Ribosomal RNA small subunit methyltransferase H (315 aa).

Residues 32–34 (GGH), aspartate 52, phenylalanine 78, aspartate 100, and glutamine 107 contribute to the S-adenosyl-L-methionine site.

The protein belongs to the methyltransferase superfamily. RsmH family.

Its subcellular location is the cytoplasm. The enzyme catalyses cytidine(1402) in 16S rRNA + S-adenosyl-L-methionine = N(4)-methylcytidine(1402) in 16S rRNA + S-adenosyl-L-homocysteine + H(+). Specifically methylates the N4 position of cytidine in position 1402 (C1402) of 16S rRNA. In Psychromonas ingrahamii (strain DSM 17664 / CCUG 51855 / 37), this protein is Ribosomal RNA small subunit methyltransferase H.